A 336-amino-acid polypeptide reads, in one-letter code: MSKKRVLTGVTTTGIPHLGNYVGAIRPAVRAAQNPDTESFLFLADYHGIIKCHEPEMIHQSTQAVAATWLACGLDPERTTFYRQSDIPEVMELNWILTCITAKGLMNRAHAYKAAVQANAENGQEDPDFGVEMGLYSYPILMTADILMFNAHEVPVGRDQIQHVEMARDIAGRFNHRFRELFTLPEVKIDENVELLVGLDGRKMSKSYGNTIPLWENDKKTQKSVNKIITNMKEPGEPKKPDESPLFEIYKAFSTPSETAEFTKMLADGLAWGEAKKLLAAKINAELAEPRERYNELTADPSQIEEILQAGAQKARKEARELLGKVRDAVGIRPLK.

Residues 11–13 and 19–20 contribute to the ATP site; these read TTT and GN. Positions 12 to 20 match the 'HIGH' region motif; sequence TTGIPHLGN. Aspartate 145 provides a ligand contact to L-tryptophan. ATP is bound by residues 157-159, leucine 196, and 203-207; these read GRD and KMSKS. The short motif at 203–207 is the 'KMSKS' region element; the sequence is KMSKS.

Belongs to the class-I aminoacyl-tRNA synthetase family. Homodimer.

It localises to the cytoplasm. It catalyses the reaction tRNA(Trp) + L-tryptophan + ATP = L-tryptophyl-tRNA(Trp) + AMP + diphosphate + H(+). In terms of biological role, catalyzes the attachment of tryptophan to tRNA(Trp). In Neisseria meningitidis serogroup A / serotype 4A (strain DSM 15465 / Z2491), this protein is Tryptophan--tRNA ligase.